The primary structure comprises 313 residues: Pantoate--beta-alanine ligase (313 aa).

Met36–His43 contacts ATP. The active-site Proton donor is the His43. (R)-pantoate is bound at residue Gln71. Residue Gln71 participates in beta-alanine binding. Position 178 to 181 (Gly178 to Asp181) interacts with ATP. Gln184 is a (R)-pantoate binding site. Met215–Arg218 serves as a coordination point for ATP.

The protein belongs to the pantothenate synthetase family. In terms of assembly, homodimer.

It localises to the cytoplasm. The protein resides in the cytosol. The enzyme catalyses (R)-pantoate + beta-alanine + ATP = (R)-pantothenate + AMP + diphosphate + H(+). It functions in the pathway cofactor biosynthesis; (R)-pantothenate biosynthesis; (R)-pantothenate from (R)-pantoate and beta-alanine: step 1/1. In terms of biological role, catalyzes the condensation of pantoate with beta-alanine to form pantothenate. Essential for panthotenate biosynthesis. This chain is Pantoate--beta-alanine ligase (PANC), found in Oryza sativa subsp. japonica (Rice).